Reading from the N-terminus, the 213-residue chain is Thymidylate kinase (213 aa).

10–17 (GLEGAGKT) contributes to the ATP binding site.

This sequence belongs to the thymidylate kinase family.

The enzyme catalyses dTMP + ATP = dTDP + ADP. Phosphorylation of dTMP to form dTDP in both de novo and salvage pathways of dTTP synthesis. The protein is Thymidylate kinase of Escherichia coli O81 (strain ED1a).